The sequence spans 475 residues: Ribulose bisphosphate carboxylase large chain (475 aa).

Residues 1-2 (MV) constitute a propeptide that is removed on maturation. N-acetylproline is present on proline 3. Lysine 14 carries the post-translational modification N6,N6,N6-trimethyllysine. Residues asparagine 123 and threonine 173 each contribute to the substrate site. The Proton acceptor role is filled by lysine 175. Position 177 (lysine 177) interacts with substrate. Residues lysine 201, aspartate 203, and glutamate 204 each contribute to the Mg(2+) site. Residue lysine 201 is modified to N6-carboxylysine. Histidine 294 serves as the catalytic Proton acceptor. Residues arginine 295, histidine 327, and serine 379 each contribute to the substrate site.

This sequence belongs to the RuBisCO large chain family. Type I subfamily. In terms of assembly, heterohexadecamer of 8 large chains and 8 small chains; disulfide-linked. The disulfide link is formed within the large subunit homodimers. Mg(2+) is required as a cofactor. The disulfide bond which can form in the large chain dimeric partners within the hexadecamer appears to be associated with oxidative stress and protein turnover.

The protein localises to the plastid. Its subcellular location is the chloroplast. It carries out the reaction 2 (2R)-3-phosphoglycerate + 2 H(+) = D-ribulose 1,5-bisphosphate + CO2 + H2O. The enzyme catalyses D-ribulose 1,5-bisphosphate + O2 = 2-phosphoglycolate + (2R)-3-phosphoglycerate + 2 H(+). Its function is as follows. RuBisCO catalyzes two reactions: the carboxylation of D-ribulose 1,5-bisphosphate, the primary event in carbon dioxide fixation, as well as the oxidative fragmentation of the pentose substrate in the photorespiration process. Both reactions occur simultaneously and in competition at the same active site. The chain is Ribulose bisphosphate carboxylase large chain from Tetradesmus obliquus (Green alga).